The primary structure comprises 337 residues: Holliday junction branch migration complex subunit RuvB (337 aa).

Residues 1 to 180 form a large ATPase domain (RuvB-L) region; that stretch reads MTRLISADKS…FGVISRLEFY (180 aa). Residues L19, R20, G61, K64, T65, T66, 127-129, R170, Y180, and R217 each bind ATP; that span reads EDF. T65 lines the Mg(2+) pocket. Positions 181 to 251 are small ATPAse domain (RuvB-S); that stretch reads THDELAFIIT…VADQALALLE (71 aa). The tract at residues 254–337 is head domain (RuvB-H); it reads EMGFDMMDRA…APEPPQGKLF (84 aa). The DNA site is built by R309 and R314.

This sequence belongs to the RuvB family. As to quaternary structure, homohexamer. Forms an RuvA(8)-RuvB(12)-Holliday junction (HJ) complex. HJ DNA is sandwiched between 2 RuvA tetramers; dsDNA enters through RuvA and exits via RuvB. An RuvB hexamer assembles on each DNA strand where it exits the tetramer. Each RuvB hexamer is contacted by two RuvA subunits (via domain III) on 2 adjacent RuvB subunits; this complex drives branch migration. In the full resolvosome a probable DNA-RuvA(4)-RuvB(12)-RuvC(2) complex forms which resolves the HJ.

The protein localises to the cytoplasm. The catalysed reaction is ATP + H2O = ADP + phosphate + H(+). In terms of biological role, the RuvA-RuvB-RuvC complex processes Holliday junction (HJ) DNA during genetic recombination and DNA repair, while the RuvA-RuvB complex plays an important role in the rescue of blocked DNA replication forks via replication fork reversal (RFR). RuvA specifically binds to HJ cruciform DNA, conferring on it an open structure. The RuvB hexamer acts as an ATP-dependent pump, pulling dsDNA into and through the RuvAB complex. RuvB forms 2 homohexamers on either side of HJ DNA bound by 1 or 2 RuvA tetramers; 4 subunits per hexamer contact DNA at a time. Coordinated motions by a converter formed by DNA-disengaged RuvB subunits stimulates ATP hydrolysis and nucleotide exchange. Immobilization of the converter enables RuvB to convert the ATP-contained energy into a lever motion, pulling 2 nucleotides of DNA out of the RuvA tetramer per ATP hydrolyzed, thus driving DNA branch migration. The RuvB motors rotate together with the DNA substrate, which together with the progressing nucleotide cycle form the mechanistic basis for DNA recombination by continuous HJ branch migration. Branch migration allows RuvC to scan DNA until it finds its consensus sequence, where it cleaves and resolves cruciform DNA. In Geobacter sp. (strain M21), this protein is Holliday junction branch migration complex subunit RuvB.